Consider the following 502-residue polypeptide: Putative F-box/FBD/LRR-repeat protein At5g22610 (502 aa).

The 47-residue stretch at 17–63 folds into the F-box domain; sequence EDLISKLPEVLLSQILSYLPTKDIVRTSVLSKRWKSVWLLIPGLDLD. 7 LRR repeats span residues 70 to 98, 99 to 127, 147 to 180, 181 to 206, 208 to 228, 238 to 263, and 344 to 373; these read YDTF…KLSI, QKNE…DVEF, CKTL…CLEE, NVYS…TIVK, DDNV…SVGY, YYYD…TFNN, and SVWL…VLET. One can recognise an FBD domain in the interval 384-435; the sequence is VERRVSSVPECLLSSLEFVEIKNRISVDDGALEVARYFVENSVNLQKVVLRL.

The polypeptide is Putative F-box/FBD/LRR-repeat protein At5g22610 (Arabidopsis thaliana (Mouse-ear cress)).